A 230-amino-acid polypeptide reads, in one-letter code: Probable nicotinate-nucleotide adenylyltransferase (230 aa).

This sequence belongs to the NadD family.

It carries out the reaction nicotinate beta-D-ribonucleotide + ATP + H(+) = deamido-NAD(+) + diphosphate. It functions in the pathway cofactor biosynthesis; NAD(+) biosynthesis; deamido-NAD(+) from nicotinate D-ribonucleotide: step 1/1. Catalyzes the reversible adenylation of nicotinate mononucleotide (NaMN) to nicotinic acid adenine dinucleotide (NaAD). This is Probable nicotinate-nucleotide adenylyltransferase from Pseudomonas putida (strain ATCC 47054 / DSM 6125 / CFBP 8728 / NCIMB 11950 / KT2440).